The sequence spans 495 residues: Cysteine--tRNA ligase (495 aa).

C29 lines the Zn(2+) pocket. Residues 31-41 (PTVYDYGHIGN) carry the 'HIGH' region motif. Zn(2+) is bound by residues C211, H236, and E240. Positions 268–272 (KMSKS) match the 'KMSKS' region motif. Position 271 (K271) interacts with ATP.

This sequence belongs to the class-I aminoacyl-tRNA synthetase family. As to quaternary structure, monomer. Zn(2+) serves as cofactor.

The protein resides in the cytoplasm. It catalyses the reaction tRNA(Cys) + L-cysteine + ATP = L-cysteinyl-tRNA(Cys) + AMP + diphosphate. The sequence is that of Cysteine--tRNA ligase from Koribacter versatilis (strain Ellin345).